The following is a 619-amino-acid chain: HAUS augmin-like complex subunit 5 (619 aa).

Methionine 1 is subject to N-acetylmethionine. Coiled coils occupy residues 73–108 (KIHRKLELEATVARLRAENQELDQSLELMDQESEAQ), 310–395 (ALLS…LVED), and 550–590 (ELLQ…LQGI).

The protein belongs to the HAUS5 family. Component of the HAUS augmin-like complex. The complex interacts with the gamma-tubulin ring complex and this interaction is required for spindle assembly. Interacts with EML3 (phosphorylated at 'Thr-882').

It is found in the cytoplasm. It localises to the cytoskeleton. The protein localises to the microtubule organizing center. Its subcellular location is the centrosome. The protein resides in the spindle. Functionally, contributes to mitotic spindle assembly, maintenance of centrosome integrity and completion of cytokinesis as part of the HAUS augmin-like complex. This chain is HAUS augmin-like complex subunit 5 (Haus5), found in Mus musculus (Mouse).